The primary structure comprises 219 residues: Probable GTP-binding protein EngB (219 aa).

The region spanning 24–207 (VQPEIAFAGR…HELIESWVRP (184 aa)) is the EngB-type G domain. Residues 32-39 (GRSNAGKS), 59-63 (GRTQH), 81-84 (DLPG), 148-151 (TKCD), and 186-188 (FSA) each bind GTP. Mg(2+) contacts are provided by Ser-39 and Thr-61.

Belongs to the TRAFAC class TrmE-Era-EngA-EngB-Septin-like GTPase superfamily. EngB GTPase family. Mg(2+) is required as a cofactor.

Functionally, necessary for normal cell division and for the maintenance of normal septation. The chain is Probable GTP-binding protein EngB from Burkholderia ambifaria (strain MC40-6).